Consider the following 166-residue polypeptide: MDMTNAQRLILSNQYYLMSQMDPANAEKYKRQQLIVERGYELQIRELDKDFGCITETECREIIDFMEMYHAMQESYNMLSEECQAKVDARRLQFLGFDIATEAQQVNYVRFLTSSEGLYPQFDKADHHFNSQMPMLDKYRRMLTTWRNCPRQYHLCSTELAQIFNA.

It belongs to the UPF0304 family.

This is UPF0304 protein VFMJ11_1926 from Aliivibrio fischeri (strain MJ11) (Vibrio fischeri).